The following is a 324-amino-acid chain: Elongation factor Ts, mitochondrial (324 aa).

The N-terminal 44 residues, 1–44 (MSLLRSLRFFPVACTGRSARAVLLQPSQPWLTFHAGPSLSSAAS), are a transit peptide targeting the mitochondrion. Residues Lys75, Lys132, and Lys191 each carry the N6-succinyllysine modification. Ser269 carries the post-translational modification Phosphoserine.

It belongs to the EF-Ts family.

Its subcellular location is the mitochondrion. Functionally, associates with the EF-Tu.GDP complex and induces the exchange of GDP to GTP. It remains bound to the aminoacyl-tRNA.EF-Tu.GTP complex up to the GTP hydrolysis stage on the ribosome. In Mus musculus (Mouse), this protein is Elongation factor Ts, mitochondrial (Tsfm).